The following is a 268-amino-acid chain: UPF0354 protein OB2234 (268 aa).

The protein belongs to the UPF0354 family.

This chain is UPF0354 protein OB2234, found in Oceanobacillus iheyensis (strain DSM 14371 / CIP 107618 / JCM 11309 / KCTC 3954 / HTE831).